Reading from the N-terminus, the 270-residue chain is Undecaprenyl-diphosphatase (270 aa).

The next 7 helical transmembrane spans lie at 1-21, 92-112, 119-139, 150-170, 193-213, 223-243, and 250-270; these read MTWWEALLLGLIQGLTEFIPV, FRLGVFILVTLVPTGVAYVLF, AFGSPRFTSAMLVGTGVLLLL, LSGVKAFVVGVAQSCALVPGI, FSFLMLLPVVLGGTVLKGLEL, LSLGIGTVAAYGSGIGAIYVV, and GNLQYFAYYCFLIGGLGLWLL.

Belongs to the UppP family.

It is found in the cell inner membrane. It catalyses the reaction di-trans,octa-cis-undecaprenyl diphosphate + H2O = di-trans,octa-cis-undecaprenyl phosphate + phosphate + H(+). Catalyzes the dephosphorylation of undecaprenyl diphosphate (UPP). Confers resistance to bacitracin. The polypeptide is Undecaprenyl-diphosphatase (Salinibacter ruber (strain DSM 13855 / M31)).